A 729-amino-acid chain; its full sequence is Transcriptional activator ptaB (729 aa).

Positions 1–12 (MPQHPGLPPGHP) are enriched in pro residues. 4 disordered regions span residues 1–69 (MPQH…QAHA), 207–341 (AAAA…QNQA), 505–538 (LELS…SLPE), and 614–729 (RGPQ…KGTA). The segment covering 38-56 (PGGPQVTQGGPMMGMPPGA) has biased composition (low complexity). A compositionally biased stretch (pro residues) spans 272–285 (APQPHPTPNPPPQQ). Low complexity-rich tracts occupy residues 286-300 (LPQA…HQQP) and 307-341 (QPQQ…QNQA). A compositionally biased stretch (polar residues) spans 614–625 (RGPQMNGPNQFA). Over residues 655–671 (GPPGMVQQGQMQPNVGQ) the composition is skewed to low complexity. Over residues 672–682 (ATSASASPQVT) the composition is skewed to polar residues.

It belongs to the MFG1 family. Interacts with somA.

The protein localises to the nucleus. Its function is as follows. Transcriptional regulator that forms a complex with somA to control biofilm formation. The sequence is that of Transcriptional activator ptaB from Aspergillus fumigatus (strain ATCC MYA-4609 / CBS 101355 / FGSC A1100 / Af293) (Neosartorya fumigata).